The chain runs to 128 residues: Modulator protein MzrA (128 aa).

Residues 1–11 lie on the Cytoplasmic side of the membrane; sequence MMVMKRPSLRQ. Residues 12-32 traverse the membrane as a helical segment; that stretch reads FSWLLGGSLLLGALFWLWLAV. The Periplasmic segment spans residues 33–128; that stretch reads QQQEATLAIR…RLRDAPHRLG (96 aa).

This sequence belongs to the MzrA family. As to quaternary structure, interacts with EnvZ.

It is found in the cell inner membrane. Functionally, modulates the activity of the EnvZ/OmpR two-component regulatory system, probably by directly modulating EnvZ enzymatic activity and increasing stability of phosphorylated OmpR. In Klebsiella pneumoniae subsp. pneumoniae (strain ATCC 700721 / MGH 78578), this protein is Modulator protein MzrA.